Here is a 398-residue protein sequence, read N- to C-terminus: Na(+)/H(+) antiporter NhaA (398 aa).

Helical transmembrane passes span 14-34 (AAGV…NWSV), 60-80 (LLLW…GLEV), 96-116 (MLPL…FLLF), 125-145 (VGWA…LTLL), 155-175 (VFLL…IALF), 179-199 (QIFW…AYLN), 214-234 (IVLW…GVIV), 263-283 (FLII…GIVL), 292-312 (LGIA…LSWL), 330-350 (IVAV…ITLL), and 362-382 (YAKL…YLAL).

This sequence belongs to the NhaA Na(+)/H(+) (TC 2.A.33) antiporter family.

Its subcellular location is the cell inner membrane. The enzyme catalyses Na(+)(in) + 2 H(+)(out) = Na(+)(out) + 2 H(+)(in). Functionally, na(+)/H(+) antiporter that extrudes sodium in exchange for external protons. The protein is Na(+)/H(+) antiporter NhaA of Pectobacterium carotovorum subsp. carotovorum (strain PC1).